A 628-amino-acid chain; its full sequence is Propionate--CoA ligase (628 aa).

This sequence belongs to the ATP-dependent AMP-binding enzyme family.

The catalysed reaction is propanoate + ATP + CoA = propanoyl-CoA + AMP + diphosphate. It participates in organic acid metabolism; propanoate degradation. In terms of biological role, catalyzes the synthesis of propionyl-CoA from propionate and CoA. Also converts acetate to acetyl-CoA but with a lower specific activity. This is Propionate--CoA ligase (prpE) from Escherichia coli (strain K12).